The chain runs to 501 residues: Dipeptide and tripeptide permease A (501 aa).

The Cytoplasmic portion of the chain corresponds to 1–34 (MSTANNKPTESVSLNAFKQPKSFYLIFSIELWER). Residues 35–55 (FGYYGLQGIMAVYLVKQLGMS) traverse the membrane as a helical segment. Over 56 to 59 (EADS) the chain is Periplasmic. A helical membrane pass occupies residues 60–80 (ITLFSSFSALVYGLVAIGGWL). At 81-89 (GDKVLGTKR) the chain is on the cytoplasmic side. A helical transmembrane segment spans residues 90 to 110 (VIMLGAIVLAIGYGLVAWSGH). Position 111 (aspartate 111) is a topological domain, periplasmic. Residues 112–132 (VAIVYMGMATIAVGNGLFKAN) traverse the membrane as a helical segment. At 133–153 (PSSLLSTCYAKDDPRLDGAFT) the chain is on the cytoplasmic side. The chain crosses the membrane as a helical span at residues 154-174 (MYYMSINIGSFFSMLATPWLA). Over 175–178 (AKFG) the chain is Periplasmic. Residues 179-199 (WSVAFALSFVGMLITVVNFLF) form a helical membrane-spanning segment. Topologically, residues 200-217 (CRSWVKDYGSKPDFEAVH) are cytoplasmic. The helical transmembrane segment at 218-238 (FGKLLATIAGVIVLIAIATWL) threads the bilayer. Residues 239 to 246 (LHNQGIAR) are Periplasmic-facing. The chain crosses the membrane as a helical span at residues 247–267 (MVLGVIALGIVIIFGKEAFAM). At 268–274 (QGAARRK) the chain is on the cytoplasmic side. Residues 275–295 (MIVAFILMLEAIIFFVLYSQM) traverse the membrane as a helical segment. The Periplasmic portion of the chain corresponds to 296 to 320 (PTSLNFFAIRNVEHTILGIAVEPEQ). A helical membrane pass occupies residues 321–341 (YQALNPFWIIIGSPILAAIYN). The Cytoplasmic portion of the chain corresponds to 342–352 (KMGDTLPMPTK). Residues 353-373 (FAIGMVLCSGAFLVLPLGAKF) form a helical membrane-spanning segment. Over 374-383 (ATDAGIVSVN) the chain is Periplasmic. The chain crosses the membrane as a helical span at residues 384–404 (WLILSYGLQSIGELMISGLGL). At 405–414 (AMVAQLVPQR) the chain is on the cytoplasmic side. Residues 415–435 (LMGFIMGSWFLTTAGANLIGG) form a helical membrane-spanning segment. Residues 436 to 459 (YVAGMMAVPENVTDPLMSLEVYGR) are Periplasmic-facing. The chain crosses the membrane as a helical span at residues 460 to 480 (VFLQIGVATAVIAALMLITAP). The Cytoplasmic segment spans residues 481–501 (KLNRMTQDDEENAKAAKTATA).

It belongs to the major facilitator superfamily. Proton-dependent oligopeptide transporter (POT/PTR) (TC 2.A.17) family. DtpA subfamily.

Its subcellular location is the cell inner membrane. Its function is as follows. Proton-dependent permease that transports di- and tripeptides. The protein is Dipeptide and tripeptide permease A of Citrobacter koseri (strain ATCC BAA-895 / CDC 4225-83 / SGSC4696).